Here is a 653-residue protein sequence, read N- to C-terminus: Dystrotelin (653 aa).

The ZZ-type zinc-finger motif lies at 223 to 279; sequence THPVRCSVCRTFPIIGLRYHCLKCLDFDICELCFLSGLHKNSHEKSHTVMEECVQMS. Positions 228, 231, 243, 246, 252, 255, 265, and 269 each coordinate Zn(2+). The stretch at 384–411 forms a coiled coil; that stretch reads RDSLNTLLRERRLLRKQLHRYKQKLQGT.

In terms of tissue distribution, strongly expressed in the nervous and muscular tissues.

The protein resides in the cell membrane. The protein is Dystrotelin (Dytn) of Mus musculus (Mouse).